A 131-amino-acid polypeptide reads, in one-letter code: Photosystem II reaction center Psb28 protein (131 aa).

Residues 110 to 131 (NGLGYSQNQKSDQTDAATEEQA) are disordered. Over residues 112–125 (LGYSQNQKSDQTDA) the composition is skewed to polar residues.

Belongs to the Psb28 family. Part of the photosystem II complex.

The protein resides in the cellular thylakoid membrane. This chain is Photosystem II reaction center Psb28 protein, found in Synechococcus sp. (strain CC9902).